The chain runs to 308 residues: Transaldolase (308 aa).

The Schiff-base intermediate with substrate role is filled by Lys125.

This sequence belongs to the transaldolase family. Type 1 subfamily. Homodimer.

It is found in the cytoplasm. The catalysed reaction is D-sedoheptulose 7-phosphate + D-glyceraldehyde 3-phosphate = D-erythrose 4-phosphate + beta-D-fructose 6-phosphate. The protein operates within carbohydrate degradation; pentose phosphate pathway; D-glyceraldehyde 3-phosphate and beta-D-fructose 6-phosphate from D-ribose 5-phosphate and D-xylulose 5-phosphate (non-oxidative stage): step 2/3. In terms of biological role, transaldolase is important for the balance of metabolites in the pentose-phosphate pathway. The polypeptide is Transaldolase (Pseudomonas fluorescens (strain Pf0-1)).